We begin with the raw amino-acid sequence, 155 residues long: Large ribosomal subunit protein eL24A (155 aa).

Residue S7 is modified to Phosphoserine. The tract at residues 66–155 (EVAKKRSRKT…AFQKVAATSR (90 aa)) is disordered. The segment covering 89–129 (LIKERRSLKPEVRKANREEKLKANKEKKKAEKAARKAEKAK) has biased composition (basic and acidic residues). Polar residues predominate over residues 131–142 (AGTQSSKFSKQQ).

The protein belongs to the eukaryotic ribosomal protein eL24 family. In terms of assembly, component of the large ribosomal subunit (LSU). Mature yeast ribosomes consist of a small (40S) and a large (60S) subunit. The 40S small subunit contains 1 molecule of ribosomal RNA (18S rRNA) and 33 different proteins (encoded by 57 genes). The large 60S subunit contains 3 rRNA molecules (25S, 5.8S and 5S rRNA) and 46 different proteins (encoded by 81 genes).

It is found in the cytoplasm. In terms of biological role, component of the ribosome, a large ribonucleoprotein complex responsible for the synthesis of proteins in the cell. The small ribosomal subunit (SSU) binds messenger RNAs (mRNAs) and translates the encoded message by selecting cognate aminoacyl-transfer RNA (tRNA) molecules. The large subunit (LSU) contains the ribosomal catalytic site termed the peptidyl transferase center (PTC), which catalyzes the formation of peptide bonds, thereby polymerizing the amino acids delivered by tRNAs into a polypeptide chain. The nascent polypeptides leave the ribosome through a tunnel in the LSU and interact with protein factors that function in enzymatic processing, targeting, and the membrane insertion of nascent chains at the exit of the ribosomal tunnel. The polypeptide is Large ribosomal subunit protein eL24A (Saccharomyces cerevisiae (strain ATCC 204508 / S288c) (Baker's yeast)).